The following is a 550-amino-acid chain: T-complex protein 1 subunit eta (550 aa).

A disordered region spans residues 529–550; that stretch reads SESANAGMMPPQGAGRGRGMPM.

This sequence belongs to the TCP-1 chaperonin family. Heterooligomeric complex of about 850 to 900 kDa that forms two stacked rings, 12 to 16 nm in diameter.

The protein localises to the cytoplasm. Its function is as follows. Molecular chaperone; assists the folding of proteins upon ATP hydrolysis. Known to play a role, in vitro, in the folding of actin and tubulin. In yeast may play a role in mitotic spindle formation. The sequence is that of T-complex protein 1 subunit eta (CCT7) from Saccharomyces cerevisiae (strain ATCC 204508 / S288c) (Baker's yeast).